A 455-amino-acid chain; its full sequence is UDP-N-acetylmuramoylalanine--D-glutamate ligase (455 aa).

119 to 125 (GTNGKTT) is a binding site for ATP.

The protein belongs to the MurCDEF family.

The protein localises to the cytoplasm. It carries out the reaction UDP-N-acetyl-alpha-D-muramoyl-L-alanine + D-glutamate + ATP = UDP-N-acetyl-alpha-D-muramoyl-L-alanyl-D-glutamate + ADP + phosphate + H(+). The protein operates within cell wall biogenesis; peptidoglycan biosynthesis. Functionally, cell wall formation. Catalyzes the addition of glutamate to the nucleotide precursor UDP-N-acetylmuramoyl-L-alanine (UMA). The polypeptide is UDP-N-acetylmuramoylalanine--D-glutamate ligase (Listeria innocua serovar 6a (strain ATCC BAA-680 / CLIP 11262)).